The following is a 219-amino-acid chain: Histidinol-phosphate aminotransferase (219 aa).

This sequence belongs to the class-II pyridoxal-phosphate-dependent aminotransferase family. Histidinol-phosphate aminotransferase subfamily. Homodimer. It depends on pyridoxal 5'-phosphate as a cofactor.

It catalyses the reaction L-histidinol phosphate + 2-oxoglutarate = 3-(imidazol-4-yl)-2-oxopropyl phosphate + L-glutamate. It participates in amino-acid biosynthesis; L-histidine biosynthesis; L-histidine from 5-phospho-alpha-D-ribose 1-diphosphate: step 7/9. This is Histidinol-phosphate aminotransferase (hisC) from Mycolicibacterium smegmatis (Mycobacterium smegmatis).